Here is a 2171-residue protein sequence, read N- to C-terminus: Mediator of DNA damage checkpoint protein 1 (2171 aa).

Acidic residues predominate over residues 1–19 (MEDTQAIDWDVEEEEETEQ). The tract at residues 1 to 22 (MEDTQAIDWDVEEEEETEQSSE) is disordered. Positions 1–150 (MEDTQAIDWD…SRGPLTVEET (150 aa)) are interaction with CHEK2. The segment at 2–220 (EDTQAIDWDV…PFAFNLNSDT (219 aa)) is interaction with the MRN complex. Thr-4 is modified (phosphothreonine). One can recognise an FHA domain in the interval 54–105 (NVVGRMPDCSVALPFPSISKQHAEIEILAWDKAPILRDCGSLNGTQILRPPK). The residue at position 108 (Ser-108) is a Phosphoserine. Residues 145–568 (LTVEETPRVQ…PAKLLVVSLE (424 aa)) are required for nuclear localization (NLS1). Thr-146 carries the post-translational modification Phosphothreonine. Phosphoserine is present on residues Ser-168, Ser-176, Ser-196, and Ser-218. 2 disordered regions span residues 185–248 (RTTS…AKQS) and 261–317 (DQPL…AEVH). A Phosphothreonine modification is found at Thr-220. The span at 261–278 (DQPLVKERDDDTKVKRGA) shows a compositional bias: basic and acidic residues. Ser-299 is modified (phosphoserine). Phosphothreonine is present on Thr-301. Over residues 306 to 317 (DSRPPGRPAEVH) the composition is skewed to basic and acidic residues. Ser-329 carries the phosphoserine modification. At Thr-331 the chain carries Phosphothreonine. The segment at 355–387 (GVGTRGPGAPGLAHLQESQAGSDTDVEEGKAPQ) is disordered. Ser-372 and Ser-376 each carry phosphoserine. Phosphothreonine is present on Thr-378. Residues Ser-394, Ser-397, and Ser-402 each carry the phosphoserine modification. The residue at position 404 (Thr-404) is a Phosphothreonine. Ser-411 is modified (phosphoserine). Disordered stretches follow at residues 443–469 (QRSQ…NREA) and 481–522 (VRAH…VDIN). Residue Thr-449 is modified to Phosphothreonine. Ser-453 carries the post-translational modification Phosphoserine. Thr-455 is subject to Phosphothreonine. Ser-485, Ser-495, Ser-498, Ser-504, Ser-505, and Ser-513 each carry phosphoserine. Residues 513–522 (SQASTTVDIN) show a composition bias toward polar residues. Position 523 is a phosphothreonine (Thr-523). Ser-590 carries the phosphoserine modification. Lys-616 participates in a covalent cross-link: Glycyl lysine isopeptide (Lys-Gly) (interchain with G-Cter in SUMO1); alternate. Residue Lys-616 forms a Glycyl lysine isopeptide (Lys-Gly) (interchain with G-Cter in SUMO2); alternate linkage. 2 disordered regions span residues 653–689 (DTLG…DNYG) and 780–1969 (SPPR…TKLN). Residues 671 to 685 (GREREQHVGGTKDSE) show a composition bias toward basic and acidic residues. 2 positions are modified to phosphoserine: Ser-780 and Ser-793. At Lys-812 the chain carries N6-acetyllysine. 4 stretches are compositionally biased toward basic and acidic residues: residues 819–844 (ETAE…ERQT), 851–862 (ELTKGKQDREQK), 868–905 (DTQR…EKQV), and 914–951 (AFER…RGEP). Ser-955 and Ser-998 each carry phosphoserine. Residues 955-964 (SQDQKGQASS) show a composition bias toward polar residues. Positions 1016-1031 (KASRIRAAEKVSRGDQ) are enriched in basic and acidic residues. At Ser-1033 the chain carries Phosphoserine. Residues 1040 to 1051 (PTVPEAPAPPQK) show a composition bias toward pro residues. Residues Ser-1068 and Ser-1086 each carry the phosphoserine modification. Residues 1103-1113 (PKPKIRTRKSS) show a composition bias toward basic residues. 2 stretches are compositionally biased toward polar residues: residues 1129 to 1157 (PSTS…SVKT) and 1170 to 1187 (PCTS…SQVT). An interaction with the PRKDC complex region spans residues 1148–1692 (SRTNRSSVKT…TNRSSVKTPE (545 aa)). Residue Thr-1157 is modified to Phosphothreonine. A Phosphothreonine modification is found at Thr-1198. Polar residues predominate over residues 1210–1227 (QPSTSTDRPVTSEPTSHA). Residue Ser-1235 is modified to Phosphoserine. The residue at position 1239 (Thr-1239) is a Phosphothreonine. Over residues 1251–1268 (QPSTSTDQPVTSEPTYQA) the composition is skewed to polar residues. Thr-1280 and Thr-1302 each carry phosphothreonine. Over residues 1306-1318 (TSRTTRSRTNMSS) the composition is skewed to low complexity. Polar residues-rich tracts occupy residues 1334-1350 (PSTS…TSRA) and 1375-1403 (PSTS…SVKT). Residues 1429 to 1441 (TSRTTRSRTNMSS) show a composition bias toward low complexity. A compositionally biased stretch (polar residues) spans 1457-1473 (PSTSTEQPVTPEPTSRA). 2 positions are modified to phosphoserine: Ser-1481 and Ser-1482. N6-acetyllysine is present on Lys-1484. Phosphothreonine is present on Thr-1485. Residue Lys-1495 forms a Glycyl lysine isopeptide (Lys-Gly) (interchain with G-Cter in SUMO1); alternate linkage. A Glycyl lysine isopeptide (Lys-Gly) (interchain with G-Cter in SUMO2); alternate cross-link involves residue Lys-1495. 3 stretches are compositionally biased toward polar residues: residues 1498-1526 (PSTS…SVKT), 1538-1557 (QPST…QVTR), and 1580-1596 (ASAS…TSRT). Thr-1507 and Thr-1548 each carry phosphothreonine. Phosphothreonine is present on residues Thr-1615 and Thr-1630. Composition is skewed to polar residues over residues 1620-1649 (QPST…SVKT) and 1661-1678 (QPST…TSRA). Residue Ser-1646 is modified to Phosphoserine. Residues Thr-1649 and Thr-1671 each carry the phosphothreonine modification. Ser-1686 is modified (phosphoserine). Phosphothreonine is present on Thr-1690. Residues 1693–1702 (PVVPTAPEPH) are compositionally biased toward pro residues. The span at 1706 to 1718 (STDQPVTPKLTSR) shows a compositional bias: polar residues. Residues Thr-1712, Thr-1746, and Thr-1753 each carry the phosphothreonine modification. The segment covering 1760–1771 (GGQSKTLRSSTV) has biased composition (polar residues). The residue at position 1763 (Ser-1763) is a Phosphoserine. A Phosphothreonine modification is found at Thr-1779. Over residues 1780-1801 (PEFQSPVTTDQPISPEPITQPS) the composition is skewed to polar residues. Positions 1780 to 2171 (PEFQSPVTTD…VLSPLEMSST (392 aa)) are required for nuclear localization (NLS2). Phosphoserine is present on residues Ser-1784 and Ser-1793. Residue Lys-1822 forms a Glycyl lysine isopeptide (Lys-Gly) (interchain with G-Cter in SUMO2) linkage. Position 1857 is a phosphoserine (Ser-1857). Residue Lys-1872 forms a Glycyl lysine isopeptide (Lys-Gly) (interchain with G-Cter in SUMO2) linkage. Phosphothreonine is present on Thr-1882. Phosphoserine is present on Ser-1902. Positions 1905 to 1918 (HQKQPQRGEVSQKT) are enriched in polar residues. Lys-1922 participates in a covalent cross-link: Glycyl lysine isopeptide (Lys-Gly) (interchain with G-Cter in SUMO1); alternate. Lys-1922 participates in a covalent cross-link: Glycyl lysine isopeptide (Lys-Gly) (interchain with G-Cter in SUMO2); alternate. Over residues 1929 to 1939 (AEKPGKEEDVV) the composition is skewed to basic and acidic residues. Thr-1940 carries the post-translational modification Phosphothreonine. BRCT domains follow at residues 1974–2052 (APKV…EYVV) and 2073–2164 (RERR…FVLS). Position 2025 is an omega-N-methylarginine (Arg-2025).

As to quaternary structure, homodimer. Interacts with H2AX, which requires phosphorylation of H2AX on 'Ser-139'. Interacts with the MRN complex, composed of MRE11, RAD50, and NBN. Interacts with CHEK2, which requires ATM-mediated phosphorylation of 'Thr-68' within the FHA domain of CHEK2. Interacts constitutively with the BRCA1-BARD1 complex, SMC1A and TP53BP1. Interacts with ATM and FANCD2, and these interactions are reduced upon DNA damage. Also interacts with the PRKDC complex, composed of XRCC6/KU70, XRCC5/KU80 and PRKDC/XRCC7. This interaction may be required for PRKDC autophosphorylation, which is essential for DNA double strand break (DSB) repair. When phosphorylated by ATM, interacts with RNF8 (via FHA domain). Interacts with CEP164. When phosphorylated, interacts with APTX (via FHA-like domain). Interacts (when phosphorylated) with TOPBP1; promoting TOPBP1 localization to DNA damage sites during mitosis. Interacts (when phosphorylated) with NBN; promoting NBN and MRN complex localization to DNA damage sites. In terms of processing, phosphorylated upon exposure to ionizing radiation (IR), ultraviolet radiation (UV), and hydroxyurea (HU). Phosphorylation in response to IR requires ATM, NBN, and possibly CHEK2. Also phosphorylated during the G2/M phase of the cell cycle and during activation of the mitotic spindle checkpoint. Phosphorylation at Thr-4 by ATM stabilizes and enhances homodimerization via the FHA domain. Phosphorylated at Ser-168 and Ser-196 by CK2 in response to DNA damage during mitosis, promoting interaction with TOPBP1. Phosphorylated by CK2 in response to DNA damage, promoting interaction with NBN and recruitment of the MRN complex to DNA damage sites. Post-translationally, sumoylation at Lys-1922 by PIAS4 following DNA damage promotes ubiquitin-mediated degradation. Ubiquitinated by RNF4, leading to proteasomal degradation; undergoes 'Lys-48'-linked polyubiquitination.

It localises to the nucleus. The protein resides in the chromosome. Histone reader protein required for checkpoint-mediated cell cycle arrest in response to DNA damage within both the S phase and G2/M phases of the cell cycle. Specifically recognizes and binds histone H2AX phosphorylated at 'Ser-139', a marker of DNA damage, serving as a scaffold for the recruitment of DNA repair and signal transduction proteins to discrete foci of DNA damage sites. Also required for downstream events subsequent to the recruitment of these proteins. These include phosphorylation and activation of the ATM, CHEK1 and CHEK2 kinases, and stabilization of TP53/p53 and apoptosis. ATM and CHEK2 may also be activated independently by a parallel pathway mediated by TP53BP1. Required for chromosomal stability during mitosis by promoting recruitment of TOPBP1 to DNA double strand breaks (DSBs): TOPBP1 forms filamentous assemblies that bridge MDC1 and tether broken chromosomes during mitosis. Required for the repair of DSBs via homologous recombination by promoting recruitment of NBN component of the MRN complex to DSBs. This is Mediator of DNA damage checkpoint protein 1 (MDC1) from Pan troglodytes (Chimpanzee).